A 455-amino-acid polypeptide reads, in one-letter code: Protein png1 (455 aa).

Residues 1–110 (MTDGRQQHTR…LPVFPSPPRD (110 aa)) form a disordered region. Positions 38-53 (SLQEQSRSRSRTQSPS) are enriched in low complexity. Positions 59 to 73 (HTPPHPSRAPPPPPT) are enriched in pro residues. Residues 74 to 98 (GAHYPSSQSPSQQHQQHQLPASSSL) are compositionally biased toward low complexity. Zn(2+) contacts are provided by Cys-199, Cys-202, Cys-231, and Cys-236. The disordered stretch occupies residues 408 to 455 (NLIPREQTSGRPGEQKTPASMQDTPVDWVAAQQMGPGQSGPDRSQDGR).

It belongs to the transglutaminase-like superfamily. PNGase family.

The sequence is that of Protein png1 (png1) from Aspergillus fumigatus (strain ATCC MYA-4609 / CBS 101355 / FGSC A1100 / Af293) (Neosartorya fumigata).